The chain runs to 293 residues: MPELPEVETVRLGLQPAMEGFRIDRAMANRCDLRFPFQPDFAARLTGQTITGLGRRAKYLLADLSSGDVLLMHLGMSGSFRVVNGAGDATPGEFHHPRSEDRTHDHVVFEMSSGARVIFNDPRRFGFMKIFARAAIDDEPHLKGLGPEPLGNAFDAAMLARACAGKQTSLKAALLDQRVVAGLGNIYVCEALWRAHLSPKRKASTLADRKGAPTDRAVRLVDAIRAVLGDAIKAGGSSLRDHRQTSGELGYFQHSFAVYDREGERCRTPGCNGTVKRLVQNGRSTFWCSGCQT.

Proline 2 serves as the catalytic Schiff-base intermediate with DNA. Glutamate 3 acts as the Proton donor in catalysis. The active-site Proton donor; for beta-elimination activity is lysine 58. Histidine 104, arginine 123, and lysine 166 together coordinate DNA. The FPG-type zinc-finger motif lies at alanine 257–threonine 293. Arginine 283 (proton donor; for delta-elimination activity) is an active-site residue.

Belongs to the FPG family. Monomer. Requires Zn(2+) as cofactor.

The catalysed reaction is Hydrolysis of DNA containing ring-opened 7-methylguanine residues, releasing 2,6-diamino-4-hydroxy-5-(N-methyl)formamidopyrimidine.. The enzyme catalyses 2'-deoxyribonucleotide-(2'-deoxyribose 5'-phosphate)-2'-deoxyribonucleotide-DNA = a 3'-end 2'-deoxyribonucleotide-(2,3-dehydro-2,3-deoxyribose 5'-phosphate)-DNA + a 5'-end 5'-phospho-2'-deoxyribonucleoside-DNA + H(+). Its function is as follows. Involved in base excision repair of DNA damaged by oxidation or by mutagenic agents. Acts as a DNA glycosylase that recognizes and removes damaged bases. Has a preference for oxidized purines, such as 7,8-dihydro-8-oxoguanine (8-oxoG). Has AP (apurinic/apyrimidinic) lyase activity and introduces nicks in the DNA strand. Cleaves the DNA backbone by beta-delta elimination to generate a single-strand break at the site of the removed base with both 3'- and 5'-phosphates. In Rhodopseudomonas palustris (strain HaA2), this protein is Formamidopyrimidine-DNA glycosylase.